A 211-amino-acid polypeptide reads, in one-letter code: Protein-L-isoaspartate O-methyltransferase (211 aa).

The active site involves S62.

The protein belongs to the methyltransferase superfamily. L-isoaspartyl/D-aspartyl protein methyltransferase family.

The protein resides in the cytoplasm. It carries out the reaction [protein]-L-isoaspartate + S-adenosyl-L-methionine = [protein]-L-isoaspartate alpha-methyl ester + S-adenosyl-L-homocysteine. Functionally, catalyzes the methyl esterification of L-isoaspartyl residues in peptides and proteins that result from spontaneous decomposition of normal L-aspartyl and L-asparaginyl residues. It plays a role in the repair and/or degradation of damaged proteins. This is Protein-L-isoaspartate O-methyltransferase from Shewanella putrefaciens (strain CN-32 / ATCC BAA-453).